The primary structure comprises 94 residues: Cell division topological specificity factor (94 aa).

The protein belongs to the MinE family.

In terms of biological role, prevents the cell division inhibition by proteins MinC and MinD at internal division sites while permitting inhibition at polar sites. This ensures cell division at the proper site by restricting the formation of a division septum at the midpoint of the long axis of the cell. The sequence is that of Cell division topological specificity factor from Hamiltonella defensa subsp. Acyrthosiphon pisum (strain 5AT).